The chain runs to 487 residues: Beta-barrel assembly-enhancing protease (487 aa).

A signal peptide spans 1 to 27 (MFRQLKKNLVATLIAAMTIGQVAPAFA). H136 provides a ligand contact to Zn(2+). Residue E137 is part of the active site. Zn(2+)-binding residues include H140 and E201. The active-site Proton donor is D205. TPR repeat units follow at residues 309-342 (RAAQ…EPGN), 344-376 (WYLD…RTNP), 377-409 (VLQL…NKDD), and 427-460 (DQEL…VKLG).

It belongs to the peptidase M48 family. BepA subfamily. In terms of assembly, interacts with BamA and LoiP. It depends on Zn(2+) as a cofactor.

It localises to the periplasm. Protease activity is inhibited by the metal chelating reagents 1,10-phenanthroline and EDTA. Its function is as follows. Functions both as a chaperone and a metalloprotease. Maintains the integrity of the outer membrane by promoting either the assembly or the elimination of outer membrane proteins, depending on their folding state. Promotes disulfide rearrangement of LptD during its biogenesis, and proteolytic degradation of LptD and BamA when their proper assembly is compromised. May facilitate membrane attachment of LoiP under unfavorable conditions. This Escherichia coli (strain K12) protein is Beta-barrel assembly-enhancing protease.